The sequence spans 456 residues: MAAFARMVKGQVRNYSAPLDMAIPASKQKYIPSSGSYPKGFLVSGTHVGVKASNTKFPDLALISSETPCSAAAVFTTNKFQAAPVQVSKKTLESRQGQGIRSVVINSGCANAVTGKGGLEDAVSMGKKVDECNGLSEPSTIVMSTGVIGQRLPISKILNKIPTAHENLASTHDAWLTTARAICTTDTFPKLLSRTFVLPSSPGRTYSLAGMTKGAGMIHPNMATLLGVLCTDAPIDPSALQSLLTHAVSRSFNSISVDGDTSTNDTVAILANGAAGGAPISSPASDDYTAMQDILTSFAQSLSQLVVRDGEGATKFVTVRVQNSPDYESARLIASTIARSPLVKTALYGRDANWGRILCAIGYTQGVAPGTVVPERTSVSFKPVDGSPVLKLLVNGEPEQVDEERASVILQEEDLEIVVDLGGGEKGEQGLGGEEAVYWFCDFSHEYVTINGDYRT.

The substrate site is built by T184, K213, T224, E311, N451, and T456. The active-site Nucleophile is T224.

This sequence belongs to the ArgJ family. In terms of assembly, heterodimer of an alpha and a beta chain. The alpha and beta chains are autoproteolytically processed from a single precursor protein within the mitochondrion.

It is found in the mitochondrion matrix. It catalyses the reaction N(2)-acetyl-L-ornithine + L-glutamate = N-acetyl-L-glutamate + L-ornithine. The enzyme catalyses L-glutamate + acetyl-CoA = N-acetyl-L-glutamate + CoA + H(+). It participates in amino-acid biosynthesis; L-arginine biosynthesis; L-ornithine and N-acetyl-L-glutamate from L-glutamate and N(2)-acetyl-L-ornithine (cyclic): step 1/1. It functions in the pathway amino-acid biosynthesis; L-arginine biosynthesis; N(2)-acetyl-L-ornithine from L-glutamate: step 1/4. Its function is as follows. Catalyzes two activities which are involved in the cyclic version of arginine biosynthesis: the synthesis of acetylglutamate from glutamate and acetyl-CoA, and of ornithine by transacetylation between acetylornithine and glutamate. This chain is Arginine biosynthesis bifunctional protein ArgJ, mitochondrial, found in Neosartorya fischeri (strain ATCC 1020 / DSM 3700 / CBS 544.65 / FGSC A1164 / JCM 1740 / NRRL 181 / WB 181) (Aspergillus fischerianus).